Consider the following 131-residue polypeptide: MSRRLGAAAAVLLLWLAVLTFALHGYYGGRLGSARRRNILLQHPALALHLPTRKMLLAVASFDDASSPSSLTTTDRHHHHHRHHGHHHHRGHDRWNRKGVPPTAAGPGEEVDPRFGVQKRLVPTGPNPLHH.

The tract at residues 67–131 (SPSSLTTTDR…VPTGPNPLHH (65 aa)) is disordered. Basic residues predominate over residues 76 to 97 (RHHHHHRHHGHHHHRGHDRWNR).

It belongs to the CLV3/ESR signal peptide family. As to expression, expressed in all aerial apical meristems, including the floral and inflorescence meristems in the reproductive phase and the shoot apical meristem in the vegetative phase. Also detected in the primordia of lateral organs such as the leaf and the floral organs.

In terms of biological role, non functional suppressor of the fon2 mutation. In Oryza sativa subsp. japonica, the protein has a single amino acid substitution at the putative processing site of the signal peptide while in all the other varieties/species of domesticated and wild rice tested the protein is functional. The protein is Inactive protein FON2 SPARE1 (FOS1) of Oryza sativa subsp. japonica (Rice).